The primary structure comprises 598 residues: Elongation factor 4 (598 aa).

Residues 4-186 (INIRNFAIIA…AIVSRLPAPS (183 aa)) form the tr-type G domain. Residues 16–21 (DHGKST) and 133–136 (NKID) contribute to the GTP site.

The protein belongs to the TRAFAC class translation factor GTPase superfamily. Classic translation factor GTPase family. LepA subfamily.

The protein localises to the cell inner membrane. The enzyme catalyses GTP + H2O = GDP + phosphate + H(+). Functionally, required for accurate and efficient protein synthesis under certain stress conditions. May act as a fidelity factor of the translation reaction, by catalyzing a one-codon backward translocation of tRNAs on improperly translocated ribosomes. Back-translocation proceeds from a post-translocation (POST) complex to a pre-translocation (PRE) complex, thus giving elongation factor G a second chance to translocate the tRNAs correctly. Binds to ribosomes in a GTP-dependent manner. This chain is Elongation factor 4, found in Ehrlichia ruminantium (strain Welgevonden).